Here is a 242-residue protein sequence, read N- to C-terminus: 3-dehydroquinate dehydratase (242 aa).

3-dehydroquinate-binding positions include Glu-39 to Arg-41 and Arg-73. His-135 (proton donor/acceptor) is an active-site residue. Residue Lys-162 is the Schiff-base intermediate with substrate of the active site. 2 residues coordinate 3-dehydroquinate: Arg-203 and Gln-228.

The protein belongs to the type-I 3-dehydroquinase family. In terms of assembly, homodimer.

The enzyme catalyses 3-dehydroquinate = 3-dehydroshikimate + H2O. The protein operates within metabolic intermediate biosynthesis; chorismate biosynthesis; chorismate from D-erythrose 4-phosphate and phosphoenolpyruvate: step 3/7. Its function is as follows. Involved in the third step of the chorismate pathway, which leads to the biosynthesis of aromatic amino acids. Catalyzes the cis-dehydration of 3-dehydroquinate (DHQ) and introduces the first double bond of the aromatic ring to yield 3-dehydroshikimate. This chain is 3-dehydroquinate dehydratase, found in Methanosarcina barkeri (strain Fusaro / DSM 804).